A 200-amino-acid chain; its full sequence is Ciliary microtubule inner protein 2C (200 aa).

The protein belongs to the CIMIP2 family. In terms of assembly, microtubule inner protein component of sperm flagellar doublet microtubules.

The protein resides in the cytoplasm. The protein localises to the cytoskeleton. It localises to the cilium axoneme. It is found in the flagellum axoneme. In terms of biological role, microtubule inner protein (MIP) part of the dynein-decorated doublet microtubules (DMTs) in cilia axoneme, which is required for motile cilia beating. Binds to the intra-tubulin interfaces. This chain is Ciliary microtubule inner protein 2C (Cimip2c), found in Mus musculus (Mouse).